The sequence spans 107 residues: ATPase inhibitor, mitochondrial (107 aa).

Residues 1-25 (MAGSALAVRARLGVWGMRVLQTRGF) constitute a mitochondrion transit peptide. Residues 25–58 (FGSDSSESMDSGAGSIREAGGAFGKREKAEEDRY) are disordered. The interval 26–52 (GSDSSESMDSGAGSIREAGGAFGKREK) is N-terminal inhibitory region. Phosphoserine is present on serine 39. The segment covering 48 to 58 (GKREKAEEDRY) has biased composition (basic and acidic residues). The stretch at 60–107 (REKTREQLAALKKHHEDEIDHHSKEIERLQKQIERHKKKIKYLKNSEH) forms a coiled coil. The antiparallel alpha-helical coiled coil region stretch occupies residues 74 to 106 (HEDEIDHHSKEIERLQKQIERHKKKIKYLKNSE). At lysine 103 the chain carries N6-succinyllysine.

Belongs to the ATPase inhibitor family. In terms of assembly, homodimer; represents the active form and is present at a pH value below 6.5. Homotetramer; represents the inactive form and is present at a pH value above 7.0.

The protein resides in the mitochondrion. Its function is as follows. Endogenous F(1)F(o)-ATPase inhibitor limiting ATP depletion when the mitochondrial membrane potential falls below a threshold and the F(1)F(o)-ATP synthase starts hydrolyzing ATP to pump protons out of the mitochondrial matrix. Required to avoid the consumption of cellular ATP when the F(1)F(o)-ATP synthase enzyme acts as an ATP hydrolase. Indirectly acts as a regulator of heme synthesis in erythroid tissues: regulates heme synthesis by modulating the mitochondrial pH and redox potential, allowing FECH to efficiently catalyze the incorporation of iron into protoporphyrin IX to produce heme. This Rattus norvegicus (Rat) protein is ATPase inhibitor, mitochondrial.